Consider the following 69-residue polypeptide: Putative membrane protein insertion efficiency factor (69 aa).

This sequence belongs to the UPF0161 family.

The protein resides in the cell inner membrane. Its function is as follows. Could be involved in insertion of integral membrane proteins into the membrane. This chain is Putative membrane protein insertion efficiency factor, found in Nitrosomonas eutropha (strain DSM 101675 / C91 / Nm57).